Consider the following 211-residue polypeptide: Orotate phosphoribosyltransferase (211 aa).

Residue Lys26 participates in 5-phospho-alpha-D-ribose 1-diphosphate binding. Orotate is bound at residue 34-35 (FF). 5-phospho-alpha-D-ribose 1-diphosphate-binding positions include 72-73 (YK), Arg98, Lys99, Lys102, His104, and 123-131 (DDVITAGTA). Orotate is bound by residues Thr127 and Arg155.

This sequence belongs to the purine/pyrimidine phosphoribosyltransferase family. PyrE subfamily. In terms of assembly, homodimer. The cofactor is Mg(2+).

The enzyme catalyses orotidine 5'-phosphate + diphosphate = orotate + 5-phospho-alpha-D-ribose 1-diphosphate. The protein operates within pyrimidine metabolism; UMP biosynthesis via de novo pathway; UMP from orotate: step 1/2. In terms of biological role, catalyzes the transfer of a ribosyl phosphate group from 5-phosphoribose 1-diphosphate to orotate, leading to the formation of orotidine monophosphate (OMP). The polypeptide is Orotate phosphoribosyltransferase (Legionella pneumophila (strain Lens)).